The sequence spans 203 residues: Dephospho-CoA kinase (203 aa).

Residues 6 to 203 enclose the DPCK domain; that stretch reads RLGITGGIAC…SLLGRGGKGG (198 aa). 14–19 serves as a coordination point for ATP; sequence ACGKSV.

Belongs to the CoaE family.

The protein resides in the cytoplasm. It catalyses the reaction 3'-dephospho-CoA + ATP = ADP + CoA + H(+). The protein operates within cofactor biosynthesis; coenzyme A biosynthesis; CoA from (R)-pantothenate: step 5/5. Catalyzes the phosphorylation of the 3'-hydroxyl group of dephosphocoenzyme A to form coenzyme A. The sequence is that of Dephospho-CoA kinase from Thermosynechococcus vestitus (strain NIES-2133 / IAM M-273 / BP-1).